A 191-amino-acid chain; its full sequence is Neuronal calcium sensor 1 (191 aa).

Gly-2 is lipidated: N-myristoyl glycine. EF-hand domains lie at 24–59 (EAEI…FPFG), 60–95 (DPSK…TSRG), 96–131 (TVEE…IYRM), and 144–179 (TPEK…DPTI). Positions 73, 75, 77, 84, 109, 111, 113, 120, 157, 159, 161, 163, and 168 each coordinate Ca(2+).

It belongs to the recoverin family.

Functionally, neuronal calcium sensor, regulator of G protein-coupled receptor phosphorylation in a calcium dependent manner. Regulates neurite extension and branching by activity-dependent (Ca2+) influx in growth cones. This Aplysia californica (California sea hare) protein is Neuronal calcium sensor 1.